Here is a 541-residue protein sequence, read N- to C-terminus: Chaperonin GroEL 1 (541 aa).

ATP-binding positions include 30–33 (TLGP), 87–91 (DGTTT), Gly414, 478–480 (NAA), and Asp494.

The protein belongs to the chaperonin (HSP60) family. As to quaternary structure, forms a cylinder of 14 subunits composed of two heptameric rings stacked back-to-back. Interacts with the co-chaperonin GroES.

The protein resides in the cytoplasm. It carries out the reaction ATP + H2O + a folded polypeptide = ADP + phosphate + an unfolded polypeptide.. In terms of biological role, together with its co-chaperonin GroES, plays an essential role in assisting protein folding. The GroEL-GroES system forms a nano-cage that allows encapsulation of the non-native substrate proteins and provides a physical environment optimized to promote and accelerate protein folding. The sequence is that of Chaperonin GroEL 1 from Thermobifida fusca (strain YX).